A 379-amino-acid polypeptide reads, in one-letter code: Glucose-1-phosphate adenylyltransferase (379 aa).

Alpha-D-glucose 1-phosphate is bound by residues Y99, G164, 179–180, and S190; that span reads EK.

It belongs to the bacterial/plant glucose-1-phosphate adenylyltransferase family. As to quaternary structure, homotetramer.

The catalysed reaction is alpha-D-glucose 1-phosphate + ATP + H(+) = ADP-alpha-D-glucose + diphosphate. Its pathway is glycan biosynthesis; glycogen biosynthesis. Functionally, involved in the biosynthesis of ADP-glucose, a building block required for the elongation reactions to produce glycogen. Catalyzes the reaction between ATP and alpha-D-glucose 1-phosphate (G1P) to produce pyrophosphate and ADP-Glc. This chain is Glucose-1-phosphate adenylyltransferase, found in Bacillus licheniformis (strain ATCC 14580 / DSM 13 / JCM 2505 / CCUG 7422 / NBRC 12200 / NCIMB 9375 / NCTC 10341 / NRRL NRS-1264 / Gibson 46).